A 584-amino-acid polypeptide reads, in one-letter code: UBX domain-containing protein 2 (584 aa).

The Cytoplasmic segment spans residues 1–80; it reads MPVVNHEDSE…PTQTSTPMAE (80 aa). The helical transmembrane segment at 81 to 101 threads the bilayer; that stretch reads TLVPPALGPRPLLFTASLPVV. The Lumenal portion of the chain corresponds to 102 to 151; the sequence is RPLPANFRNDFRTIGLNGRSNTVWSMFESFSYDGNPFLFILLLIPRIINR. Residues 152-172 form a helical membrane-spanning segment; sequence LSATIFTFFCTLLSLHSISGG. The Cytoplasmic portion of the chain corresponds to 173 to 584; the sequence is GNSGKPKISK…DEEDEENEEQ (412 aa). Residues 426–570 enclose the UBX domain; sequence ETTGKQATLQ…WPNGSLLVEA (145 aa).

As to quaternary structure, component of the DOA10 ubiquitin ligase complex which contains E3 ligase SSM4/DOA10 and CDC48-binding protein UBX2/SEL1. Component of the HRD1 ubiquitin ligase complex which contains the E3 ligase HRD1, its cofactors HRD3, USA1 and DER1, substrate recruiting factor YOS9 and UBX2. In ERAD-L, HRD3 and YOS9 jointly bind misfolded glycoproteins in the endoplasmic reticulum (ER) lumen. Movement of ERAD-L substrates through the ER membrane is facilitated by HRD1 and DER1 which have lateral gates facing each other and which distort the membrane region between the lateral gates, making it much thinner than a normal phospholipid bilayer. Substrates insert into the membrane as a hairpin loop with one strand interacting with DER1 and the other with HRD1. Both the DOA10 and HRD1 ubiquitin ligase complexes interact with the heterotrimeric CDC48-NPL4-UFD1 ATPase complex which is recruited by UBX2 via its interaction with CDC48 and which moves ubiquitinated substrates to the cytosol for targeting to the proteasome.

It localises to the endoplasmic reticulum membrane. Integral endoplasmic reticulum membrane protein that coordinates the assembly of the ER-associated protein degradation (ERAD) machinery at the ER membrane. Mediates binding of CDC48 to the E3 ubiquitin ligases SSM4/DOA10 and HRD1, and to ERAD substrates. Component of the DOA10 ubiquitin ligase complex, which is part of the ERAD-C pathway responsible for the rapid degradation of membrane proteins with misfolded cytoplasmic domains. ERAD-C substrates are ubiquitinated through DOA10 in conjunction with the E2 ubiquitin-conjugating enzymes UBC6 and UBC7-CUE1. Also a component of the HRD1 ubiquitin ligase complex, which is part of the ERAD-L and ERAD-M pathways responsible for the rapid degradation of soluble lumenal and membrane proteins with misfolded lumenal domains (ERAD-L), or ER-membrane proteins with misfolded transmembrane domains (ERAD-M). ERAD-L substrates are ubiquitinated through HRD1 in conjunction with the E2 ubiquitin-conjugating enzymes UBC1 and UBC7-CUE1. Ubiquitinated substrates are then removed to the cytosol via the action of the CDC48-NPL4-UFD1 ATPase complex and targeted to the proteasome. The protein is UBX domain-containing protein 2 (UBX2) of Saccharomyces cerevisiae (strain ATCC 204508 / S288c) (Baker's yeast).